A 961-amino-acid chain; its full sequence is Outer capsid protein VP2 (961 aa).

The protein belongs to the orbivirus VP2 family.

Its subcellular location is the virion. In terms of biological role, the VP2 protein is one of the two proteins (with VP5) which constitute the virus particle outer capsid. It is the major target of the host immunogenic response. Responsible for viral attachment to target host cell, probably by binding to sialic acid. This attachment induces virion internalization predominantly through clathrin-dependent endocytosis. The sequence is that of Outer capsid protein VP2 (Segment-2) from Bluetongue virus 1 (isolate South Africa vaccine) (BTV 1).